The primary structure comprises 86 residues: Large ribosomal subunit protein bL27 (86 aa).

Residues Met1–Tyr26 are disordered.

It belongs to the bacterial ribosomal protein bL27 family.

This chain is Large ribosomal subunit protein bL27, found in Marinobacter nauticus (strain ATCC 700491 / DSM 11845 / VT8) (Marinobacter aquaeolei).